An 86-amino-acid chain; its full sequence is Small ribosomal subunit protein uS17 (86 aa).

The protein belongs to the universal ribosomal protein uS17 family. In terms of assembly, part of the 30S ribosomal subunit.

Functionally, one of the primary rRNA binding proteins, it binds specifically to the 5'-end of 16S ribosomal RNA. This Helicobacter acinonychis (strain Sheeba) protein is Small ribosomal subunit protein uS17.